The following is a 485-amino-acid chain: Putative aldehyde dehydrogenase AldY (485 aa).

An NAD(+)-binding site is contributed by 231–236 (GSTAVG). Residues E253 and C287 contribute to the active site.

It belongs to the aldehyde dehydrogenase family.

It catalyses the reaction an aldehyde + NAD(+) + H2O = a carboxylate + NADH + 2 H(+). May contribute to protect cells against stress due to ethanol and related compounds. This chain is Putative aldehyde dehydrogenase AldY (aldY), found in Bacillus subtilis (strain 168).